The chain runs to 165 residues: Small ribosomal subunit protein uS5 (165 aa).

Positions 10 to 73 (LKEKVVFINR…EDAKKNLVEV (64 aa)) constitute an S5 DRBM domain.

It belongs to the universal ribosomal protein uS5 family. As to quaternary structure, part of the 30S ribosomal subunit. Contacts proteins S4 and S8.

With S4 and S12 plays an important role in translational accuracy. In terms of biological role, located at the back of the 30S subunit body where it stabilizes the conformation of the head with respect to the body. The chain is Small ribosomal subunit protein uS5 from Clostridium acetobutylicum (strain ATCC 824 / DSM 792 / JCM 1419 / IAM 19013 / LMG 5710 / NBRC 13948 / NRRL B-527 / VKM B-1787 / 2291 / W).